The sequence spans 753 residues: Cytoplasmic polyadenylation element-binding protein 3 (753 aa).

A disordered region spans residues 111 to 286 (VGESTPSSAG…NGSWHGELPP (176 aa)). Composition is skewed to basic and acidic residues over residues 131 to 142 (KPTEKISVDEPP) and 175 to 188 (FGKEEQKPEPEVVK). Residues 227–239 (SPAKISSNSSSSS) are compositionally biased toward low complexity. Residues 265–279 (SRQGLSNRDNLSNGS) show a composition bias toward polar residues. One can recognise an RRM domain in the interval 298–320 (IFVGGVPWDITEAALKDSFGEFG). The segment at 567–589 (KAYAGPHRRPHLTSNSLSKSHGC) is disordered. Residues 578-589 (LTSNSLSKSHGC) show a composition bias toward polar residues.

Cytoplasmic polyadenylation element binding protein that binds to and regulates the translation of specific mRNAs. This Caenorhabditis briggsae protein is Cytoplasmic polyadenylation element-binding protein 3 (cpb-3).